Reading from the N-terminus, the 98-residue chain is Small ribosomal subunit protein bS20 (98 aa).

Residues 1 to 15 (MAPKKTTKKGGPKKR) show a composition bias toward basic residues. The segment at 1 to 21 (MAPKKTTKKGGPKKRPSAEKR) is disordered.

Belongs to the bacterial ribosomal protein bS20 family.

In terms of biological role, binds directly to 16S ribosomal RNA. The protein is Small ribosomal subunit protein bS20 of Chlamydia felis (strain Fe/C-56) (Chlamydophila felis).